A 387-amino-acid polypeptide reads, in one-letter code: 3-ketoacyl-CoA thiolase (387 aa).

Catalysis depends on Cys-91, which acts as the Acyl-thioester intermediate. Catalysis depends on proton acceptor residues His-343 and Cys-373.

This sequence belongs to the thiolase-like superfamily. Thiolase family. Heterotetramer of two alpha chains (FadB) and two beta chains (FadA).

The protein resides in the cytoplasm. The enzyme catalyses an acyl-CoA + acetyl-CoA = a 3-oxoacyl-CoA + CoA. The protein operates within lipid metabolism; fatty acid beta-oxidation. Catalyzes the final step of fatty acid oxidation in which acetyl-CoA is released and the CoA ester of a fatty acid two carbons shorter is formed. This chain is 3-ketoacyl-CoA thiolase, found in Escherichia coli O9:H4 (strain HS).